The chain runs to 492 residues: V-type proton ATPase subunit B 2 (492 aa).

It belongs to the ATPase alpha/beta chains family. As to quaternary structure, V-ATPase is a heteromultimeric enzyme composed of a peripheral catalytic V1 complex (main components: subunits A, B, C, D, E, and F) attached to an integral membrane V0 proton pore complex (main component: the proteolipid protein).

In terms of biological role, non-catalytic subunit of the peripheral V1 complex of vacuolar ATPase. V-ATPase is responsible for acidifying a variety of intracellular compartments in eukaryotic cells. The polypeptide is V-type proton ATPase subunit B 2 (Acetabularia acetabulum (Mermaid's wine glass)).